The sequence spans 133 residues: Ribosome-binding factor A (133 aa).

Belongs to the RbfA family. As to quaternary structure, monomer. Binds 30S ribosomal subunits, but not 50S ribosomal subunits or 70S ribosomes.

It is found in the cytoplasm. One of several proteins that assist in the late maturation steps of the functional core of the 30S ribosomal subunit. Associates with free 30S ribosomal subunits (but not with 30S subunits that are part of 70S ribosomes or polysomes). Required for efficient processing of 16S rRNA. May interact with the 5'-terminal helix region of 16S rRNA. The polypeptide is Ribosome-binding factor A (Pseudomonas fluorescens (strain ATCC BAA-477 / NRRL B-23932 / Pf-5)).